The following is a 92-amino-acid chain: Small ribosomal subunit protein bS20 (92 aa).

Disordered stretches follow at residues Met1 to Lys25 and His68 to Ala92. Low complexity predominate over residues Ala80–Ala92.

Belongs to the bacterial ribosomal protein bS20 family.

Functionally, binds directly to 16S ribosomal RNA. The protein is Small ribosomal subunit protein bS20 of Deinococcus radiodurans (strain ATCC 13939 / DSM 20539 / JCM 16871 / CCUG 27074 / LMG 4051 / NBRC 15346 / NCIMB 9279 / VKM B-1422 / R1).